The chain runs to 189 residues: MNPISLLFLALAMSTDAFAAALGKGASLHKPRFIEALRTGLIFGAIETITPVIGWGIGQVAARFAESWDHWIAFTLLLVLGLHMIYNGIKHDDDEEQEKPGQHSFWILAVTAFATSIDALAVGVGLAFVDVNIVIAALAIGLATTVMVTIGVMLGRVLGTMVGKRAEIVGGIVLIIVGATILYEHLSAA.

A run of 6 helical transmembrane segments spans residues 3 to 23 (PISL…AALG), 41 to 61 (LIFG…GQVA), 69 to 89 (DHWI…YNGI), 105 to 125 (FWIL…VGVG), 133 to 153 (IVIA…IGVM), and 168 to 188 (IVGG…HLSA).

It belongs to the MntP (TC 9.B.29) family.

It is found in the cell inner membrane. In terms of biological role, probably functions as a manganese efflux pump. The chain is Putative manganese efflux pump MntP from Pseudomonas savastanoi pv. phaseolicola (strain 1448A / Race 6) (Pseudomonas syringae pv. phaseolicola (strain 1448A / Race 6)).